The sequence spans 221 residues: Oxaloacetate tautomerase FAHD1, mitochondrial (221 aa).

The N-terminal 24 residues, 1–24 (MASTKPLSRFWEWGKNIVCVGRNY), are a transit peptide targeting the mitochondrion. Serine 37 carries the post-translational modification Phosphoserine. Positions 68, 70, and 99 each coordinate Mg(2+). Position 110 is an N6-acetyllysine (lysine 110). The residue at position 112 (lysine 112) is an N6-succinyllysine.

The protein belongs to the FAH family. Homodimer. Requires Mg(2+) as cofactor. Mn(2+) is required as a cofactor.

The protein localises to the mitochondrion. It localises to the cytoplasm. Its subcellular location is the cytosol. The enzyme catalyses oxaloacetate = enol-oxaloacetate. It carries out the reaction oxaloacetate + H(+) = pyruvate + CO2. The catalysed reaction is a 3-acylpyruvate + H2O = a carboxylate + pyruvate + H(+). It catalyses the reaction acetylpyruvate + H2O = acetate + pyruvate + H(+). The enzyme catalyses 3-fumarylpyruvate + H2O = fumarate + pyruvate + H(+). With respect to regulation, oxaloacetate decarboxylation is competitively inhibited by oxalate. Its function is as follows. Tautomerase that converts enol-oxaloacetate, a strong inhibitor of succinate dehydrogenase, to the physiological keto form of oxaloacetate. It is thereby required to maximize aerobic respiration efficiency by preventing succinate dehydrogenase inhibition. Also acts as a weak oxaloacetate decarboxylase (ODx), catalyzing the decarboxylation of oxaloacetate (OAA) to pyruvate and CO(2), and as such is likely a regulatory enzyme in the TCA cycle. Also displays acylpyruvase activity, being able to hydrolyze acetylpyruvate and fumarylpyruvate in vitro. The polypeptide is Oxaloacetate tautomerase FAHD1, mitochondrial (Rattus norvegicus (Rat)).